A 140-amino-acid polypeptide reads, in one-letter code: Putative membrane protein ORF7 (140 aa).

A helical transmembrane segment spans residues 44–60; sequence TCAVSFFALFMLIIWVL. The interval 66–118 is disordered; it reads PEGSTTRGTDAHTQTEGSTTRGTDAHTQTEGSRDQGSMTPEADDLTRPPLGHG. Residues 68-103 show a composition bias toward polar residues; it reads GSTTRGTDAHTQTEGSTTRGTDAHTQTEGSRDQGSM.

Its subcellular location is the membrane. The protein is Putative membrane protein ORF7 (ORF7) of Ictalurid herpesvirus 1 (strain Auburn) (IcHV-1).